The primary structure comprises 860 residues: Leucine--tRNA ligase (860 aa).

The short motif at 42–52 is the 'HIGH' region element; sequence PYPSGRLHMGH. Positions 619-623 match the 'KMSKS' region motif; sequence KMSKS. Lysine 622 is a binding site for ATP.

The protein belongs to the class-I aminoacyl-tRNA synthetase family.

It localises to the cytoplasm. It catalyses the reaction tRNA(Leu) + L-leucine + ATP = L-leucyl-tRNA(Leu) + AMP + diphosphate. This Histophilus somni (strain 2336) (Haemophilus somnus) protein is Leucine--tRNA ligase.